Here is a 273-residue protein sequence, read N- to C-terminus: 3-methyl-2-oxobutanoate hydroxymethyltransferase 1 (273 aa).

The Mg(2+) site is built by Asp-49 and Asp-88. 3-methyl-2-oxobutanoate is bound by residues 49–50, Asp-88, and Lys-118; that span reads DS. A Mg(2+)-binding site is contributed by Glu-120. Catalysis depends on Glu-187, which acts as the Proton acceptor.

This sequence belongs to the PanB family. Homodecamer; pentamer of dimers. The cofactor is Mg(2+).

The protein localises to the cytoplasm. It carries out the reaction 3-methyl-2-oxobutanoate + (6R)-5,10-methylene-5,6,7,8-tetrahydrofolate + H2O = 2-dehydropantoate + (6S)-5,6,7,8-tetrahydrofolate. It functions in the pathway cofactor biosynthesis; (R)-pantothenate biosynthesis; (R)-pantoate from 3-methyl-2-oxobutanoate: step 1/2. Catalyzes the reversible reaction in which hydroxymethyl group from 5,10-methylenetetrahydrofolate is transferred onto alpha-ketoisovalerate to form ketopantoate. The sequence is that of 3-methyl-2-oxobutanoate hydroxymethyltransferase 1 from Pseudomonas aeruginosa (strain UCBPP-PA14).